Reading from the N-terminus, the 58-residue chain is UPF0391 membrane protein ABO_0024 (58 aa).

2 helical membrane-spanning segments follow: residues 4–24 (WALTFLVVAIIAGVLGFGGIA) and 28–48 (ASIAKIIFFIFLALLVISLVV).

It belongs to the UPF0391 family.

It localises to the cell membrane. This Alcanivorax borkumensis (strain ATCC 700651 / DSM 11573 / NCIMB 13689 / SK2) protein is UPF0391 membrane protein ABO_0024.